Reading from the N-terminus, the 321-residue chain is Glucokinase (321 aa).

8–13 (GDVGGT) contacts ATP.

The protein belongs to the bacterial glucokinase family.

It is found in the cytoplasm. It carries out the reaction D-glucose + ATP = D-glucose 6-phosphate + ADP + H(+). This chain is Glucokinase, found in Enterobacter sp. (strain 638).